Here is a 199-residue protein sequence, read N- to C-terminus: Protein GrpE (199 aa).

The tract at residues 20–52 (YKVENEILEEETDEESQHQEPALGHPSYTALEE) is disordered.

Belongs to the GrpE family. As to quaternary structure, homodimer.

It is found in the cytoplasm. Participates actively in the response to hyperosmotic and heat shock by preventing the aggregation of stress-denatured proteins, in association with DnaK and GrpE. It is the nucleotide exchange factor for DnaK and may function as a thermosensor. Unfolded proteins bind initially to DnaJ; upon interaction with the DnaJ-bound protein, DnaK hydrolyzes its bound ATP, resulting in the formation of a stable complex. GrpE releases ADP from DnaK; ATP binding to DnaK triggers the release of the substrate protein, thus completing the reaction cycle. Several rounds of ATP-dependent interactions between DnaJ, DnaK and GrpE are required for fully efficient folding. This chain is Protein GrpE, found in Legionella pneumophila (strain Corby).